A 196-amino-acid chain; its full sequence is Protein/nucleic acid deglycase 3 (196 aa).

Cysteine 106 serves as the catalytic Nucleophile. Cysteine sulfinic acid (-SO2H); alternate is present on cysteine 106.

Belongs to the peptidase C56 family. In terms of assembly, homodimer. In terms of processing, cys-106 is easily oxidized to sulfinic acid.

It carries out the reaction N(omega)-(1-hydroxy-2-oxopropyl)-L-arginyl-[protein] + H2O = lactate + L-arginyl-[protein] + H(+). The catalysed reaction is N(6)-(1-hydroxy-2-oxopropyl)-L-lysyl-[protein] + H2O = lactate + L-lysyl-[protein] + H(+). The enzyme catalyses S-(1-hydroxy-2-oxopropyl)-L-cysteinyl-[protein] + H2O = lactate + L-cysteinyl-[protein] + H(+). It catalyses the reaction N(omega)-(1-hydroxy-2-oxoethyl)-L-arginyl-[protein] + H2O = L-arginyl-[protein] + glycolate + H(+). It carries out the reaction N(6)-(1-hydroxy-2-oxoethyl)-L-lysyl-[protein] + H2O = glycolate + L-lysyl-[protein] + H(+). The catalysed reaction is S-(1-hydroxy-2-oxoethyl)-L-cysteinyl-[protein] + H2O = glycolate + L-cysteinyl-[protein] + H(+). The enzyme catalyses N(2)-(1-hydroxy-2-oxopropyl)-dGTP + H2O = lactate + dGTP + H(+). It catalyses the reaction N(2)-(1-hydroxy-2-oxopropyl)-GTP + H2O = lactate + GTP + H(+). It carries out the reaction N(2)-(1-hydroxy-2-oxopropyl)-GDP + H2O = lactate + GDP + H(+). The catalysed reaction is N(2)-(1-hydroxy-2-oxopropyl)-GMP + H2O = lactate + GMP + H(+). The enzyme catalyses N(2)-(1-hydroxy-2-oxoethyl)-dGTP + H2O = dGTP + glycolate + H(+). It catalyses the reaction N(2)-(1-hydroxy-2-oxoethyl)-GTP + H2O = glycolate + GTP + H(+). It carries out the reaction N(2)-(1-hydroxy-2-oxoethyl)-GDP + H2O = glycolate + GDP + H(+). The catalysed reaction is N(2)-(1-hydroxy-2-oxoethyl)-GMP + H2O = glycolate + GMP + H(+). The enzyme catalyses an N(2)-(1-hydroxy-2-oxopropyl)-guanosine in RNA + H2O = a guanosine in RNA + lactate + H(+). It catalyses the reaction an N(2)-(1-hydroxy-2-oxopropyl)-2'-deoxyguanosine in DNA + H2O = a 2'-deoxyguanosine in DNA + lactate + H(+). It carries out the reaction an N(2)-(1-hydroxy-2-oxoethyl)-guanosine in RNA + H2O = a guanosine in RNA + glycolate + H(+). The catalysed reaction is an N(2)-(1-hydroxy-2-oxoethyl)-2'-deoxyguanosine in DNA + H2O = a 2'-deoxyguanosine in DNA + glycolate + H(+). With respect to regulation, glyoxalase activity is inhibited by zinc ions. Active as a chaperone in both its reduced and oxidized states, and is more active in its oxidized form. Its function is as follows. Protein and nucleotide deglycase that catalyzes the deglycation of the Maillard adducts formed between amino groups of proteins or nucleotides and reactive carbonyl groups of glyoxals. Thus, functions as a protein deglycase that repairs methylglyoxal- and glyoxal-glycated proteins, and releases repaired proteins and lactate or glycolate, respectively. Deglycates cysteine, arginine and lysine residues in proteins, and thus reactivates these proteins by reversing glycation by glyoxals. Is able to repair glycated serum albumin, collagen, glyceraldehyde-3-phosphate dehydrogenase, and fructose biphosphate aldolase. Acts on early glycation intermediates (hemithioacetals and aminocarbinols), preventing the formation of Schiff bases and advanced glycation endproducts (AGE) that cause irreversible damage. Also functions as a nucleotide deglycase able to repair glycated guanine in the free nucleotide pool (GTP, GDP, GMP, dGTP) and in DNA and RNA. Is thus involved in a major nucleotide repair system named guanine glycation repair (GG repair), dedicated to reversing methylglyoxal and glyoxal damage via nucleotide sanitization and direct nucleic acid repair. However, is less efficient than Hsp31 and YhbO, suggesting that YajL might be preferentially dedicated to protein repair. Displays a covalent chaperone activity with sulfenylated thiol proteins by forming mixed disulfides with members of the thiol proteome, and preferentially with sulfenylated cellular proteins, upon oxidative stress; these mixed disulfides can be subsequently reduced by low-molecular-weight thiols to regenerate YajL and reduced proteins. Involved in biogenesis of ribosomal proteins, probably as a ribosomal protein-folding chaperone. Confers resistance to oxidative stress. Plays an important role in protection against electrophile/carbonyl stress. The chaperone activity reported for YajL is probably recruited to execute its deglycase activity, to interact with non-native glycated proteins and gain access to partially buried glycated sites. Also displays an apparent glyoxalase activity that in fact reflects its deglycase activity. This chain is Protein/nucleic acid deglycase 3 (yajL), found in Escherichia coli (strain K12).